We begin with the raw amino-acid sequence, 72 residues long: Conotoxin Gla(2)-TxVI/B (72 aa).

The first 19 residues, Met1 to Ala19, serve as a signal peptide directing secretion. A propeptide spanning residues Leu20–Arg44 is cleaved from the precursor. 3 cysteine pairs are disulfide-bonded: Cys48–Cys62, Cys55–Cys66, and Cys61–Cys70. Glu56 is subject to 4-carboxyglutamate. Pro58 carries the post-translational modification 4-hydroxyproline. Ser71 carries the post-translational modification Serine amide.

Post-translationally, brominated at one of the Trp residues. In terms of tissue distribution, expressed by the venom duct.

Its subcellular location is the secreted. The chain is Conotoxin Gla(2)-TxVI/B from Conus textile (Cloth-of-gold cone).